Reading from the N-terminus, the 438-residue chain is Glutamyl-tRNA(Gln) amidotransferase subunit D (438 aa).

Positions 92 to 422 (PEVTIIGTGG…EEVRKMMLTN (331 aa)) constitute an Asparaginase/glutaminase domain. Active-site residues include Thr-102, Thr-178, Asp-179, and Lys-256.

This sequence belongs to the asparaginase 1 family. GatD subfamily. Heterodimer of GatD and GatE.

The catalysed reaction is L-glutamyl-tRNA(Gln) + L-glutamine + ATP + H2O = L-glutaminyl-tRNA(Gln) + L-glutamate + ADP + phosphate + H(+). In terms of biological role, allows the formation of correctly charged Gln-tRNA(Gln) through the transamidation of misacylated Glu-tRNA(Gln) in organisms which lack glutaminyl-tRNA synthetase. The reaction takes place in the presence of glutamine and ATP through an activated gamma-phospho-Glu-tRNA(Gln). The GatDE system is specific for glutamate and does not act on aspartate. The sequence is that of Glutamyl-tRNA(Gln) amidotransferase subunit D from Pyrococcus abyssi (strain GE5 / Orsay).